Reading from the N-terminus, the 180-residue chain is Crossover junction endodeoxyribonuclease RuvC (180 aa).

Residues D7, E66, and D138 contribute to the active site. Positions 7, 66, and 138 each coordinate Mg(2+).

The protein belongs to the RuvC family. Homodimer which binds Holliday junction (HJ) DNA. The HJ becomes 2-fold symmetrical on binding to RuvC with unstacked arms; it has a different conformation from HJ DNA in complex with RuvA. In the full resolvosome a probable DNA-RuvA(4)-RuvB(12)-RuvC(2) complex forms which resolves the HJ. It depends on Mg(2+) as a cofactor.

The protein localises to the cytoplasm. It catalyses the reaction Endonucleolytic cleavage at a junction such as a reciprocal single-stranded crossover between two homologous DNA duplexes (Holliday junction).. Its function is as follows. The RuvA-RuvB-RuvC complex processes Holliday junction (HJ) DNA during genetic recombination and DNA repair. Endonuclease that resolves HJ intermediates. Cleaves cruciform DNA by making single-stranded nicks across the HJ at symmetrical positions within the homologous arms, yielding a 5'-phosphate and a 3'-hydroxyl group; requires a central core of homology in the junction. The consensus cleavage sequence is 5'-(A/T)TT(C/G)-3'. Cleavage occurs on the 3'-side of the TT dinucleotide at the point of strand exchange. HJ branch migration catalyzed by RuvA-RuvB allows RuvC to scan DNA until it finds its consensus sequence, where it cleaves and resolves the cruciform DNA. This chain is Crossover junction endodeoxyribonuclease RuvC, found in Herminiimonas arsenicoxydans.